The primary structure comprises 180 residues: Small ribosomal subunit protein uS4 (180 aa).

In terms of domain architecture, S4 RNA-binding spans 103–165 (RRLQTIVYRK…KGSPFAKEGH (63 aa)).

It belongs to the universal ribosomal protein uS4 family. As to quaternary structure, part of the 30S ribosomal subunit. Contacts protein S5. The interaction surface between S4 and S5 is involved in control of translational fidelity.

Functionally, one of the primary rRNA binding proteins, it binds directly to 16S rRNA where it nucleates assembly of the body of the 30S subunit. With S5 and S12 plays an important role in translational accuracy. This is Small ribosomal subunit protein uS4 from Thermococcus kodakarensis (strain ATCC BAA-918 / JCM 12380 / KOD1) (Pyrococcus kodakaraensis (strain KOD1)).